A 394-amino-acid polypeptide reads, in one-letter code: DNA replication and repair protein RecF (394 aa).

30–37 (GSNGQGKT) contributes to the ATP binding site.

This sequence belongs to the RecF family.

The protein localises to the cytoplasm. In terms of biological role, the RecF protein is involved in DNA metabolism; it is required for DNA replication and normal SOS inducibility. RecF binds preferentially to single-stranded, linear DNA. It also seems to bind ATP. This is DNA replication and repair protein RecF from Cutibacterium acnes (strain DSM 16379 / KPA171202) (Propionibacterium acnes).